Here is a 145-residue protein sequence, read N- to C-terminus: Large ribosomal subunit protein bL19 (145 aa).

The protein belongs to the bacterial ribosomal protein bL19 family.

Functionally, this protein is located at the 30S-50S ribosomal subunit interface and may play a role in the structure and function of the aminoacyl-tRNA binding site. The protein is Large ribosomal subunit protein bL19 of Brucella abortus (strain S19).